The following is a 371-amino-acid chain: Queuine tRNA-ribosyltransferase (371 aa).

The active-site Proton acceptor is the Asp-90. Substrate contacts are provided by residues 90–94, Asp-144, Gln-188, and Gly-215; that span reads DSGGF. The segment at 246–252 is RNA binding; that stretch reads GVGTPED. The active-site Nucleophile is Asp-265. An RNA binding; important for wobble base 34 recognition region spans residues 270–274; that stretch reads TRNAR. The Zn(2+) site is built by Cys-303, Cys-305, Cys-308, and His-334.

The protein belongs to the queuine tRNA-ribosyltransferase family. As to quaternary structure, homodimer. Within each dimer, one monomer is responsible for RNA recognition and catalysis, while the other monomer binds to the replacement base PreQ1. Zn(2+) serves as cofactor.

It catalyses the reaction 7-aminomethyl-7-carbaguanine + guanosine(34) in tRNA = 7-aminomethyl-7-carbaguanosine(34) in tRNA + guanine. It participates in tRNA modification; tRNA-queuosine biosynthesis. Functionally, catalyzes the base-exchange of a guanine (G) residue with the queuine precursor 7-aminomethyl-7-deazaguanine (PreQ1) at position 34 (anticodon wobble position) in tRNAs with GU(N) anticodons (tRNA-Asp, -Asn, -His and -Tyr). Catalysis occurs through a double-displacement mechanism. The nucleophile active site attacks the C1' of nucleotide 34 to detach the guanine base from the RNA, forming a covalent enzyme-RNA intermediate. The proton acceptor active site deprotonates the incoming PreQ1, allowing a nucleophilic attack on the C1' of the ribose to form the product. After dissociation, two additional enzymatic reactions on the tRNA convert PreQ1 to queuine (Q), resulting in the hypermodified nucleoside queuosine (7-(((4,5-cis-dihydroxy-2-cyclopenten-1-yl)amino)methyl)-7-deazaguanosine). The polypeptide is Queuine tRNA-ribosyltransferase (Neisseria meningitidis serogroup C / serotype 2a (strain ATCC 700532 / DSM 15464 / FAM18)).